The following is a 31-amino-acid chain: Conserved oligomeric Golgi complex subunit 5 (31 aa).

This sequence belongs to the COG5 family. In terms of assembly, component of the conserved oligomeric Golgi complex which is composed of eight different subunits and is required for normal Golgi morphology and localization.

Its subcellular location is the cytoplasm. The protein localises to the cytosol. It localises to the golgi apparatus membrane. Required for normal Golgi function. This is Conserved oligomeric Golgi complex subunit 5 (COG5) from Bos taurus (Bovine).